A 299-amino-acid chain; its full sequence is 4-hydroxybenzoate octaprenyltransferase (299 aa).

Transmembrane regions (helical) follow at residues 33 to 53 (VGFL…ADGV), 56 to 76 (WWTL…GCVI), 107 to 127 (LLMF…MNQL), 151 to 171 (LPQV…FAAI), 180 to 200 (WLLY…YAMV), 213 to 233 (IAIL…TLML), 247 to 267 (HTYW…FIIA), and 278 to 298 (AFMH…LATT).

It belongs to the UbiA prenyltransferase family. The cofactor is Mg(2+).

It is found in the cell inner membrane. It catalyses the reaction all-trans-octaprenyl diphosphate + 4-hydroxybenzoate = 4-hydroxy-3-(all-trans-octaprenyl)benzoate + diphosphate. It participates in cofactor biosynthesis; ubiquinone biosynthesis. Catalyzes the prenylation of para-hydroxybenzoate (PHB) with an all-trans polyprenyl group. Mediates the second step in the final reaction sequence of ubiquinone-8 (UQ-8) biosynthesis, which is the condensation of the polyisoprenoid side chain with PHB, generating the first membrane-bound Q intermediate 3-octaprenyl-4-hydroxybenzoate. This is 4-hydroxybenzoate octaprenyltransferase from Xylella fastidiosa (strain M12).